The following is a 298-amino-acid chain: Probable endonuclease 4 (298 aa).

The Zn(2+) site is built by His-69, His-111, Glu-146, Asp-180, His-183, His-215, Asp-228, His-230, and Glu-260.

Belongs to the AP endonuclease 2 family. Requires Zn(2+) as cofactor.

It catalyses the reaction Endonucleolytic cleavage to 5'-phosphooligonucleotide end-products.. Endonuclease IV plays a role in DNA repair. It cleaves phosphodiester bonds at apurinic or apyrimidinic (AP) sites, generating a 3'-hydroxyl group and a 5'-terminal sugar phosphate. This chain is Probable endonuclease 4, found in Bacillus cereus (strain 03BB102).